A 176-amino-acid chain; its full sequence is Calcium and integrin-binding family member 2 (176 aa).

EF-hand domains follow at residues 55–90 (RENP…LCES), 92–127 (PRDL…LTKS), and 133–168 (EVVL…APDF). Ca(2+) contacts are provided by Asp105, Asn107, Asp109, Asp116, Asp146, Asp148, Asp150, Lys152, and Asp157.

Monomer. Homodimer. Interacts with WHRN and MYO7A. Interacts with ITGA2B (via C-terminus cytoplasmic tail region); the interactions are stabilized/increased in a calcium and magnesium-dependent manner. Interacts with ITGA7 (via C-terminus cytoplasmic tail region); the interactions are stabilized/increased in a calcium and magnesium-dependent manner. Interacts with TMC1. Interacts with TMC2. Expressed in liver, heart, kidney, brain, spleen, stomach, ovary, testis and muscle.

It is found in the cytoplasm. It localises to the cell projection. The protein resides in the stereocilium. The protein localises to the photoreceptor inner segment. Its subcellular location is the cilium. It is found in the photoreceptor outer segment. It localises to the cell membrane. The protein resides in the sarcolemma. Its function is as follows. Calcium- and integrin-binding protein that plays a role in intracellular calcium homeostasis. Acts as an auxiliary subunit of the sensory mechanoelectrical transduction (MET) channel in hair cells. Essential for mechanoelectrical transduction (MET) currents in auditory hair cells and thereby required for hearing. Regulates the function of hair cell mechanotransduction by controlling the distribution of transmembrane channel-like proteins TMC1 and TMC2, and by regulating the function of the MET channels in hair cells. Required for the maintenance of auditory hair cell stereocilia bundle morphology and function and for hair-cell survival in the cochlea. Critical for proper photoreceptor cell maintenance and function. Plays a role in intracellular calcium homeostasis by decreasing ATP-induced calcium release. This Ovis aries (Sheep) protein is Calcium and integrin-binding family member 2 (CIB2).